We begin with the raw amino-acid sequence, 512 residues long: Putative aldehyde-dehydrogenase-like protein y4uC (512 aa).

A disordered region spans residues Met-14–Asn-41. Gly-266 to Gly-271 is a binding site for NADP(+). Active-site residues include Glu-286 and Cys-320.

This sequence belongs to the aldehyde dehydrogenase family.

It functions in the pathway amino-acid degradation; 4-aminobutanoate degradation. Functionally, could be a succinate-semialdehyde dehydrogenase (NADP(+)). This is Putative aldehyde-dehydrogenase-like protein y4uC from Sinorhizobium fredii (strain NBRC 101917 / NGR234).